Consider the following 1402-residue polypeptide: Roundabout homolog 3 (1402 aa).

The signal sequence occupies residues 1 to 20 (MLRYLLKTLLQMNLFADSLA). The Extracellular segment spans residues 21–891 (RDISNSSELL…ERLAKVLRKP (871 aa)). 3 N-linked (GlcNAc...) asparagine glycosylation sites follow: N25, N34, and N53. Ig-like C2-type domains are found at residues 64 to 160 (PRIV…ASLE), 166 to 253 (DDFR…AELV), 258 to 342 (PSFL…GSLS), 347 to 440 (PQFV…ALLE), and 450 to 531 (PPII…GEAT). A disulfide bond links C85 and C143. An N-linked (GlcNAc...) asparagine glycan is attached at N156. Cystine bridges form between C187/C236 and C279/C326. N-linked (GlcNAc...) asparagine glycans are attached at residues N355, N363, N410, N459, and N503. A disulfide bond links C368 and C424. Residues C472 and C521 are joined by a disulfide bond. Disordered regions lie at residues 540–561 (EDWG…PPSQ) and 639–662 (EPSP…EDPW). Residues 543–552 (GASPGPATGP) are compositionally biased toward low complexity. 3 Fibronectin type-III domains span residues 558–652 (PPSQ…TQDS), 672–766 (AVRM…IPEE), and 771–869 (PPQG…FPPA). Polar residues predominate over residues 646 to 655 (PVQTQDSSLS). N-linked (GlcNAc...) asparagine glycosylation is found at N784, N813, and N820. The chain crosses the membrane as a helical span at residues 892–912 (AFLAGSSAACGALLLGFCAAL). Topologically, residues 913-1402 (YRRQKQRKEL…PGRNRREEPR (490 aa)) are cytoplasmic. Disordered regions lie at residues 965–989 (SWPH…NPDP), 1032–1307 (FHGG…VVQA), and 1340–1402 (GRPS…EEPR). Polar residues-rich tracts occupy residues 1038–1049 (QHSSGDPSTWSQ) and 1142–1152 (PSPTSSYGQQS). The span at 1158–1169 (PSPPDPPQPPTD) shows a compositional bias: pro residues. Low complexity-rich tracts occupy residues 1178-1191 (RRVP…LSVS) and 1215-1228 (ASPS…SSAP). The segment covering 1243–1254 (HGHRARIRKKPK) has biased composition (basic residues). S1263 is subject to Phosphoserine. Positions 1294–1304 (LERERSGERRV) are enriched in basic and acidic residues. A compositionally biased stretch (polar residues) spans 1346 to 1357 (SHGQGTSTCSTA). Low complexity predominate over residues 1358–1371 (GSNSSRGSNSSRGS).

This sequence belongs to the immunoglobulin superfamily. ROBO family. In terms of assembly, interacts (via Fibronectin type-III 1 domain) with NELL2 (via the EGF domains) with a 3:3 stoichiometry; this interaction promotes oligomerization of ROBO3 resulting in the repulsion of commissural axons in the midline. Detected in embryonal spinal cord and hindbrain.

Its subcellular location is the membrane. Functionally, receptor involved in axon guidance during development. Acts as a multifunctional regulator of pathfinding that simultaneously mediates NELL2 repulsion, inhibits SLIT repulsion, and facilitates Netrin-1/NTN1 attraction. In spinal cord development plays a role in guiding commissural axons probably by preventing premature sensitivity to Slit proteins thus inhibiting Slit signaling through ROBO1/ROBO2. Binding OF NELL2 to the receptor ROBO3 promotes oligomerization of ROBO3, resulting in the repulsion of commissural axons in the midline. ROBO3 also indirectly boosts axon attraction to NTN1 without interacting with NTN1 itself. Its function is as follows. Mediates NELL2 premature repulsion of commissural axons during midline crossing. In terms of biological role, after midline crossing by the commissural axons, may, in concert with ROBO1 and ROBO2, prevent midline recrossing. Does not mediate NELL2 signaling. In Mus musculus (Mouse), this protein is Roundabout homolog 3.